The sequence spans 127 residues: MSSNYATPLDDEVFPLSFANYQFTEHVSLGEHYSLNTSEDAKYNNLNGPFVVPRDTGKFDLNTSSASDETVFSLDNPQENNYKHQAMNNVQDCRMAVAAKTTQSCDKLTDLYANAAQQNYRLWLSSF.

It is found in the vacuole membrane. Required for viability of cells lacking mtDNA. The sequence is that of Interacting with cytoskeleton protein 1 (ICY1) from Saccharomyces cerevisiae (strain ATCC 204508 / S288c) (Baker's yeast).